Here is a 172-residue protein sequence, read N- to C-terminus: Biogenesis of lysosome-related organelles complex 1 subunit 6 (172 aa).

The span at 1-10 (MNVPVPPPPD) shows a compositional bias: pro residues. 2 disordered regions span residues 1–35 (MNVP…RSPD) and 136–172 (ALKL…AKRT). Positions 143 to 164 (RQKEELEREQQREREFEREKQL) are enriched in basic and acidic residues.

It belongs to the BLOC1S6 family. Homodimer. Octamer composed of one copy each BLOC1S1, BLOC1S2, BLOC1S3, BLOC1S4, BLOC1S5, BLOC1S6, DTNBP1/BLOC1S7 and SNAPIN/BLOC1S8. The BLOC-1 complex associates with the AP-3 protein complex and membrane protein cargos. Interacts with BLOC1S4, BLOC1S5, DTNBP1/BLOC1S7, F-actin, SNAP25 isoform 1 and isoform 2, SNAP47 and STX12. Component of the biogenesis of lysosome-related organelles complex 1 (BLOC-1) composed of BLOC1S1, BLOC1S2, BLOC1S3, BLOC1S4, BLOC1S5, BLOC1S6, DTNBP1/BLOC1S7 and SNAPIN/BLOC1S8.

The protein localises to the cytoplasm. It localises to the membrane. Component of the BLOC-1 complex, a complex that is required for normal biogenesis of lysosome-related organelles (LRO), such as platelet dense granules and melanosomes. In concert with the AP-3 complex, the BLOC-1 complex is required to target membrane protein cargos into vesicles assembled at cell bodies for delivery into neurites and nerve terminals. The BLOC-1 complex, in association with SNARE proteins, is also proposed to be involved in neurite extension. May play a role in intracellular vesicle trafficking, particularly in the vesicle-docking and fusion process. The polypeptide is Biogenesis of lysosome-related organelles complex 1 subunit 6 (Bloc1s6) (Rattus norvegicus (Rat)).